The primary structure comprises 214 residues: Urease accessory protein UreE (214 aa).

Residues 163–214 (NAEPSGVDHSHEATDSGHGYGEDHDHDHSHDHNHDHDHNHDHDHSHSHDSHE) form a disordered region. The span at 168-214 (GVDHSHEATDSGHGYGEDHDHDHSHDHNHDHDHNHDHDHSHSHDSHE) shows a compositional bias: basic and acidic residues.

It belongs to the UreE family.

The protein resides in the cytoplasm. Functionally, involved in urease metallocenter assembly. Binds nickel. Probably functions as a nickel donor during metallocenter assembly. In Natronomonas pharaonis (strain ATCC 35678 / DSM 2160 / CIP 103997 / JCM 8858 / NBRC 14720 / NCIMB 2260 / Gabara) (Halobacterium pharaonis), this protein is Urease accessory protein UreE.